A 304-amino-acid polypeptide reads, in one-letter code: Polyisoprenyl-teichoic acid--peptidoglycan teichoic acid transferase TagU (304 aa).

Residues 1-4 (MKKK) are Cytoplasmic-facing. The chain crosses the membrane as a helical; Signal-anchor for type II membrane protein span at residues 5 to 25 (ILFWILGIIGIMIIGGGVYAY). At 26-304 (NVYSSVSKTL…KLRAHLELTK (279 aa)) the chain is on the extracellular side.

This sequence belongs to the LytR/CpsA/Psr (LCP) family.

The protein localises to the cell membrane. The protein operates within cell wall biogenesis. May catalyze the final step in cell wall teichoic acid biosynthesis, the transfer of the anionic cell wall polymers (APs) from their lipid-linked precursor to the cell wall peptidoglycan (PG). The chain is Polyisoprenyl-teichoic acid--peptidoglycan teichoic acid transferase TagU from Bacillus mycoides (strain KBAB4) (Bacillus weihenstephanensis).